The chain runs to 67 residues: Conotoxin AbVIM (67 aa).

An N-terminal signal peptide occupies residues 1–17; the sequence is VLIIAVLFLTACQLIAT. A propeptide spanning residues 18–40 is cleaved from the precursor; sequence ASYARSERKHPDLRLSSRNSKLS. Disulfide bonds link Cys-43-Cys-57, Cys-50-Cys-61, and Cys-56-Cys-66.

This sequence belongs to the conotoxin O1 superfamily. Expressed by the venom duct.

It is found in the secreted. In Conus abbreviatus (Abbreviated cone), this protein is Conotoxin AbVIM.